A 90-amino-acid polypeptide reads, in one-letter code: Acylphosphatase (90 aa).

The 88-residue stretch at 3–90 (AVHMNASGQV…FEGQDFIVKY (88 aa)) folds into the Acylphosphatase-like domain. Catalysis depends on residues R18 and N36.

This sequence belongs to the acylphosphatase family.

It carries out the reaction an acyl phosphate + H2O = a carboxylate + phosphate + H(+). The sequence is that of Acylphosphatase (acyP) from Pediococcus pentosaceus (strain ATCC 25745 / CCUG 21536 / LMG 10740 / 183-1w).